Reading from the N-terminus, the 280-residue chain is Putative pyruvate, phosphate dikinase regulatory protein 1 (280 aa).

152-159 provides a ligand contact to ADP; sequence GVSRTSKT.

It belongs to the pyruvate, phosphate/water dikinase regulatory protein family. PDRP subfamily.

It catalyses the reaction N(tele)-phospho-L-histidyl/L-threonyl-[pyruvate, phosphate dikinase] + ADP = N(tele)-phospho-L-histidyl/O-phospho-L-threonyl-[pyruvate, phosphate dikinase] + AMP + H(+). The enzyme catalyses N(tele)-phospho-L-histidyl/O-phospho-L-threonyl-[pyruvate, phosphate dikinase] + phosphate + H(+) = N(tele)-phospho-L-histidyl/L-threonyl-[pyruvate, phosphate dikinase] + diphosphate. In terms of biological role, bifunctional serine/threonine kinase and phosphorylase involved in the regulation of the pyruvate, phosphate dikinase (PPDK) by catalyzing its phosphorylation/dephosphorylation. The chain is Putative pyruvate, phosphate dikinase regulatory protein 1 from Latilactobacillus sakei subsp. sakei (strain 23K) (Lactobacillus sakei subsp. sakei).